The following is a 245-amino-acid chain: 6-carboxyhexanoate--CoA ligase (245 aa).

Belongs to the BioW family. Homodimer. It depends on Mg(2+) as a cofactor.

It carries out the reaction heptanedioate + ATP + CoA = 6-carboxyhexanoyl-CoA + AMP + diphosphate. It participates in metabolic intermediate metabolism; pimeloyl-CoA biosynthesis; pimeloyl-CoA from pimelate: step 1/1. Functionally, catalyzes the transformation of pimelate into pimeloyl-CoA with concomitant hydrolysis of ATP to AMP. This chain is 6-carboxyhexanoate--CoA ligase, found in Sulfurihydrogenibium azorense (strain DSM 15241 / OCM 825 / Az-Fu1).